Here is a 762-residue protein sequence, read N- to C-terminus: Subtilisin-like protease SBT3.11 (762 aa).

The first 16 residues, 1–16 (MMSSIVSWWFFWVISA), serve as a signal peptide directing secretion. The propeptide at 17–116 (VCILKVEFNI…VTPNTFYELQ (100 aa)) is activation peptide. One can recognise an Inhibitor I9 domain in the interval 37-115 (VHIVYLGEKE…QVTPNTFYEL (79 aa)). Positions 120-609 (TFDYLGLSHS…GGLVNPNKAA (490 aa)) constitute a Peptidase S8 domain. Catalysis depends on Asp-150, which acts as the Charge relay system. N-linked (GlcNAc...) asparagine glycosylation occurs at Asn-206. The active-site Charge relay system is His-226. N-linked (GlcNAc...) asparagine glycans are attached at residues Asn-241 and Asn-371. Ser-540 functions as the Charge relay system in the catalytic mechanism.

The protein belongs to the peptidase S8 family.

The protein resides in the secreted. The polypeptide is Subtilisin-like protease SBT3.11 (Arabidopsis thaliana (Mouse-ear cress)).